The primary structure comprises 471 residues: uncharacterized protein (471 aa).

The tract at residues 13-57 (KGGATIGATPMESDSSVSALSGSSASKVSRRGRRRSHLASKSSAP) is disordered. The segment covering 27 to 39 (SSVSALSGSSASK) has biased composition (low complexity). Residues 40-50 (VSRRGRRRSHL) show a composition bias toward basic residues. 2 CCHC-type zinc fingers span residues 397 to 414 (YACH…ECRQ) and 417 to 434 (SVCR…KCQN). Residues 438–457 (CRNCRHRGQPSGHYMLSNAC) form a gag-like cysteine motif region.

To corresponding ORF of B.mori (R1BM).

This is an uncharacterized protein from Drosophila melanogaster (Fruit fly).